Consider the following 338-residue polypeptide: NADPH dehydrogenase (338 aa).

FMN is bound at residue Ser-23–Cys-26. Tyr-28 is a binding site for substrate. The FMN site is built by Ala-60 and Gln-102. His-164–His-167 lines the substrate pocket. FMN contacts are provided by residues Arg-215 and Gly-307–Arg-308.

Belongs to the NADH:flavin oxidoreductase/NADH oxidase family. NamA subfamily. In terms of assembly, homotetramer. The cofactor is FMN.

The catalysed reaction is A + NADPH + H(+) = AH2 + NADP(+). Its function is as follows. Catalyzes the reduction of the double bond of an array of alpha,beta-unsaturated aldehydes and ketones. It also reduces the nitro group of nitroester and nitroaromatic compounds. It could have a role in detoxification processes. The sequence is that of NADPH dehydrogenase from Bacillus pumilus (strain SAFR-032).